Consider the following 1311-residue polypeptide: MDSMPRPERHAESLLDICHEAGSTPMEMTVSQTENLTLQSISSSEDFDLEDDFSPFILAREGAAPRGENWPRRTEGVEIIVTFPPDPLQEASQEDLKESNQVTSEHQEREQVHPVSPPDDAEMVGLTGRMLTTQPSLLKTDGSSEELCGVDVALSPPRPCLDSSLAASAAGEVAPCVLKEQQRQSDEFPTSDISYSSRRTGLPLPPLSCLPMRSCIFNMEKSPKSPRHRERKVPSLSLSVPKLLEPLSRPLSQSAEFSSSKNHQEVTQEGPVEHTLRGSNCTLWSRNMCSFRKSGKQGVAESWPSQEMEGWDKTKTSGFKEGPSLFSCESVKEDTTPTERERDSGYHVSEMQRGGEDSQYLSSRKKESWTARVVERDSGVEHPILCKLLEVSNSEMTPAEEKEIGNENVPDAKSNSVHKSGAMEPHAASEEVSVPKNGPSVNSDGPAEELEGHRDIEQNRKIPMEEETNPEMNGVVPLTHIAFPGEGTSKGPARAEPHLQRRKRPAQNSNSFNLLAHREHDKLQTNTHRTKLDSRTKARNRAPPNLMVSIQASIKPNMHKNSIKTQVFPALELIDHRPHPSSKFQRRAPLTEKKSTHQTQKPKKQAFPRIGKHAGIKKPGIPLSAETTDPRLHFLDLKYSDMFKEINSASNGPGIYEMFGTPVYCHIREAERHDHRCYREIRTAPSGRCVVNKCQSSESDRCSNSRARLLQKRQHIKPPKPLHGLRQKHRGFISKDKGCKDMGGHTEDSVSEPDGQMKSPGNDFLSSKDDAQLMHLIPIPELSPEQKAPAPVSDLSIVEEIFTEECADEEGILNDDSLTQSLGDLKEPEGLHPQAPLVPSENSWAVLSEKRSGKRVSPEKHNVEPLDKINAEQMFPGYLEFDSLSEKSKTLVSFSSCSFQENLERAPSPTEQHWARSLEQDSLENNSTTYQTFGKISQEILDPGKNEELTDELLGCLVEELLALDEKDNNSCQIMTNEADAKNLNLVFSRRGNTIEELGRETTDVKLQRCINGFRIYDEENFLTSNEKKTLSDKSLNHEEAIFWTKGEILGRGAYGTVYCGLTSLGQLIAVKQVALDTSDKLATEKEYRKLQEEVDLLKALKHVNIVAYLGTCLEENTLSIFMEFVPGGSISSIINRFGPLPEMVFCKYTRQILQGVAYLHDNCVVHRDIKGNNVMLMPTGIIKLIDFGCAKRLAWAGLNGTHSDMLKSMRGTPYWMAPEVINESGYGRKSDIWSIGCTVFEMATGKPPLASMDRMAAMFYIGAHRGLMPPLPARFSEPAADFVRLCLTRDQHERPSALQLLKHSFLKRSQ.

7 disordered regions span residues 85 to 119 (PDPLQEASQEDLKESNQVTSEHQEREQVHPVSPPD), 250 to 274 (PLSQSAEFSSSKNHQEVTQEGPVEH), 330 to 363 (SVKEDTTPTERERDSGYHVSEMQRGGEDSQYLSS), 396 to 472 (MTPA…NPEM), 486 to 508 (EGTSKGPARAEPHLQRRKRPAQN), 576 to 607 (HRPHPSSKFQRRAPLTEKKSTHQTQKPKKQAF), and 734 to 767 (SKDKGCKDMGGHTEDSVSEPDGQMKSPGNDFLSS). A compositionally biased stretch (polar residues) spans 250–261 (PLSQSAEFSSSK). 3 stretches are compositionally biased toward basic and acidic residues: residues 262–274 (NHQEVTQEGPVEH), 330–345 (SVKEDTTPTERERDSG), and 450–464 (LEGHRDIEQNRKIPM). Basic and acidic residues predominate over residues 734–748 (SKDKGCKDMGGHTED). In terms of domain architecture, Protein kinase spans 1044–1307 (WTKGEILGRG…ALQLLKHSFL (264 aa)). ATP-binding positions include 1050 to 1058 (LGRGAYGTV) and lysine 1072. Residue aspartate 1169 is the Proton acceptor of the active site.

Belongs to the protein kinase superfamily. STE Ser/Thr protein kinase family. STE20 subfamily.

The enzyme catalyses L-seryl-[protein] + ATP = O-phospho-L-seryl-[protein] + ADP + H(+). It catalyses the reaction L-threonyl-[protein] + ATP = O-phospho-L-threonyl-[protein] + ADP + H(+). The chain is Mitogen-activated protein kinase kinase kinase 19 (Map3k19) from Mus musculus (Mouse).